The chain runs to 440 residues: Stromal membrane-associated protein 1 (440 aa).

The Arf-GAP domain maps to 18–143; the sequence is QLILSKLLRE…IAITNKEKEK (126 aa). A C4-type zinc finger spans residues 33-56; the sequence is CADCEAKGPRWASWNIGVFICIRC. Basic and acidic residues-rich tracts occupy residues 140 to 158 and 165 to 178; these read EKEK…EKPA and KLPK…EPKK. Disordered regions lie at residues 140–211 and 410–440; these read EKEK…PATA and NASA…QLWK. The short motif at 192 to 196 is the Interaction with clathrin heavy chains element; that stretch reads LLGLD. Positions 420–440 are enriched in low complexity; the sequence is STTAGWSGSSSGQTLSTQLWK.

In terms of assembly, interacts with ARF6. Interacts with clathrin heavy chains via the clathrin box-like motif. In terms of tissue distribution, detected in adult brain, lung, heart, liver, ovary and bone marrow. Detected in stromal cells of the red pulp of adult spleen.

The protein resides in the cell membrane. In terms of biological role, GTPase activating protein that acts on ARF6. Plays a role in clathrin-dependent endocytosis. May play a role in erythropoiesis. The protein is Stromal membrane-associated protein 1 (Smap1) of Mus musculus (Mouse).